The chain runs to 375 residues: Trichodiene synthase (375 aa).

This sequence belongs to the trichodiene synthase family.

It catalyses the reaction (2E,6E)-farnesyl diphosphate = trichodiene + diphosphate. Its pathway is sesquiterpene biosynthesis; trichothecene biosynthesis. Functionally, TS is a member of the terpene cyclase group of enzymes. It catalyzes the isomerization and cyclization of farnesyl pyro-phosphate to form trichodiene, the first cyclic intermediate in the biosynthetic pathway for trichothecenes. It serves to branch trichothecene biosynthesis from the isoprenoid pathway. The polypeptide is Trichodiene synthase (TRI5) (Fusarium acaciae-mearnsii).